Reading from the N-terminus, the 345-residue chain is Dihydroorotate dehydrogenase (quinone) (345 aa).

Residues 65–69 (AGLDK) and Thr89 each bind FMN. Lys69 is a substrate binding site. Substrate is bound at residue 114 to 118 (NRMGF). 2 residues coordinate FMN: Asn142 and Asn175. Asn175 contributes to the substrate binding site. The active-site Nucleophile is the Ser178. Residue Asn180 coordinates substrate. FMN is bound by residues Lys220 and Thr248. Position 249–250 (249–250 (NT)) interacts with substrate. FMN contacts are provided by residues Gly271, Gly300, and 321–322 (YT).

It belongs to the dihydroorotate dehydrogenase family. Type 2 subfamily. In terms of assembly, monomer. The cofactor is FMN.

Its subcellular location is the cell membrane. It carries out the reaction (S)-dihydroorotate + a quinone = orotate + a quinol. It functions in the pathway pyrimidine metabolism; UMP biosynthesis via de novo pathway; orotate from (S)-dihydroorotate (quinone route): step 1/1. Its function is as follows. Catalyzes the conversion of dihydroorotate to orotate with quinone as electron acceptor. The chain is Dihydroorotate dehydrogenase (quinone) from Burkholderia mallei (strain NCTC 10247).